The primary structure comprises 226 residues: 7-cyano-7-deazaguanine synthase (226 aa).

ATP is bound at residue 10-20; it reads FSGGQDSTTLA. 4 residues coordinate Zn(2+): Cys-190, Cys-205, Cys-208, and Cys-211.

Belongs to the QueC family. Zn(2+) serves as cofactor.

The catalysed reaction is 7-carboxy-7-deazaguanine + NH4(+) + ATP = 7-cyano-7-deazaguanine + ADP + phosphate + H2O + H(+). It participates in purine metabolism; 7-cyano-7-deazaguanine biosynthesis. Catalyzes the ATP-dependent conversion of 7-carboxy-7-deazaguanine (CDG) to 7-cyano-7-deazaguanine (preQ(0)). The sequence is that of 7-cyano-7-deazaguanine synthase from Helicobacter pylori (strain Shi470).